Consider the following 359-residue polypeptide: Palmitoyltransferase PFA5 (359 aa).

A run of 4 helical transmembrane segments spans residues tryptophan 10 to tyrosine 30, alanine 47 to tryptophan 67, leucine 164 to valine 184, and leucine 206 to phenylalanine 226. In terms of domain architecture, DHHC spans valine 120 to methionine 170.

It belongs to the DHHC palmitoyltransferase family. PFA5 subfamily. Autopalmitoylated.

The protein localises to the membrane. It catalyses the reaction L-cysteinyl-[protein] + hexadecanoyl-CoA = S-hexadecanoyl-L-cysteinyl-[protein] + CoA. The protein is Palmitoyltransferase PFA5 (PFA5) of Eremothecium gossypii (strain ATCC 10895 / CBS 109.51 / FGSC 9923 / NRRL Y-1056) (Yeast).